A 2075-amino-acid polypeptide reads, in one-letter code: Autophagy-related protein 2 homolog B (2075 aa).

The Chorein N-terminal domain occupies 13–107 (ACRYLLQRYL…LEMVFRPRPR (95 aa)). Phosphoserine is present on residues Ser255, Ser379, Ser496, Ser839, Ser885, Ser898, and Ser1007. Phosphotyrosine is present on Tyr1011. Phosphoserine occurs at positions 1015 and 1017. Phosphothreonine is present on Thr1021. Positions 1373 to 1403 (KAEMKPGVPQRKPKVDSSARSSSHGPVLPEA) are disordered. Ser1525 is modified (phosphoserine). Disordered stretches follow at residues 1570–1593 (TSPAKSYIPHSSPSQTPTRHGRHT), 1759–1792 (EPNLVVSFPGPKQASPNHRANSAEGGNGLEEDVS), and 2055–2075 (RNQIRPDVRQDESQKWRHGED). Over residues 1578-1587 (PHSSPSQTPT) the composition is skewed to polar residues. The span at 2058-2075 (IRPDVRQDESQKWRHGED) shows a compositional bias: basic and acidic residues.

Belongs to the ATG2 family. As to quaternary structure, interacts with WDR45/WIPI4.

The protein resides in the preautophagosomal structure membrane. It is found in the lipid droplet. It localises to the endoplasmic reticulum membrane. The enzyme catalyses a 1,2-diacyl-sn-glycero-3-phospho-L-serine(in) = a 1,2-diacyl-sn-glycero-3-phospho-L-serine(out). It carries out the reaction a 1,2-diacyl-sn-glycero-3-phosphoethanolamine(in) = a 1,2-diacyl-sn-glycero-3-phosphoethanolamine(out). In terms of biological role, lipid transfer protein required for both autophagosome formation and regulation of lipid droplet morphology and dispersion. Tethers the edge of the isolation membrane (IM) to the endoplasmic reticulum (ER) and mediates direct lipid transfer from ER to IM for IM expansion. Binds to the ER exit site (ERES), which is the membrane source for autophagosome formation, and extracts phospholipids from the membrane source and transfers them to ATG9 (ATG9A or ATG9B) to the IM for membrane expansion. Lipid transfer activity is enhanced by WDR45/WIPI4, which promotes ATG2B-association with phosphatidylinositol 3-monophosphate (PI3P)-containing membranes. This Mus musculus (Mouse) protein is Autophagy-related protein 2 homolog B.